A 459-amino-acid polypeptide reads, in one-letter code: Argininosuccinate lyase (459 aa).

It belongs to the lyase 1 family. Argininosuccinate lyase subfamily.

It localises to the cytoplasm. The catalysed reaction is 2-(N(omega)-L-arginino)succinate = fumarate + L-arginine. It functions in the pathway amino-acid biosynthesis; L-arginine biosynthesis; L-arginine from L-ornithine and carbamoyl phosphate: step 3/3. This is Argininosuccinate lyase from Methylobacterium radiotolerans (strain ATCC 27329 / DSM 1819 / JCM 2831 / NBRC 15690 / NCIMB 10815 / 0-1).